Consider the following 559-residue polypeptide: Protein pp71 (559 aa).

The residue at position 218 (C218) is an S-nitrosocysteine; by host. T223 bears the Phosphothreonine mark. Disordered regions lie at residues 404-440 and 530-559; these read EFLPQSPGLPPTEEEEEEEEEDDEDDLSSTPTPTPLS and SSTLRSVPAPRPSPISTASTSSTPRSRPRI. Residues 415 to 430 show a composition bias toward acidic residues; sequence TEEEEEEEEEDDEDDL. 2 stretches are compositionally biased toward low complexity: residues 431 to 440 and 543 to 559; these read SSTPTPTPLS and PISTASTSSTPRSRPRI.

This sequence belongs to the herpesviridae pp71 family. In terms of assembly, interacts with the host protein DAXX; this interaction takes place at ND10 and induces the reversal of DAXX-mediated repression of viral transcription. Interacts with UL35. Interacts with host TMEM173/STING1; this interaction inhibits the cGAS/STING pathway. Interacts with host RB1; this interaction mediates RB1 proteasomal degradation. In terms of processing, S-nitrosylation limits ability to undermine the cGAS/STING antiviral pathway.

Its subcellular location is the virion tegument. It localises to the host nucleus. The protein localises to the host endoplasmic reticulum. In terms of biological role, stimulates viral immediate-early (IE) transcription. Plays a role in the inhibition of the host innate repsonse by targeting STING1 and thus the cGAS-STING pathway. Also counteracts host DAXX-mediated repression of viral transcription. Displaces a DAXX-binding protein, ATRX, from nuclear domain 10 sites (ND10) shortly after infection. Increases the basal level of SUMOylated DAXX in infected cells. Stimulates quiescent cells to re-enter the cell cycle, proceed through G1 and enter the S phase. Interacts with hypophosphorylated forms of RB1 and induces their degradation by the proteasome without involving ubiquitin conjugation. This Homo sapiens (Human) protein is Protein pp71 (UL82).